The chain runs to 369 residues: Ribonuclease D (369 aa).

A 3'-5' exonuclease domain is found at Met-1 to Val-166. Residues Arg-206–Ala-285 form the HRDC domain.

It belongs to the RNase D family. The cofactor is a divalent metal cation.

It localises to the cytoplasm. The enzyme catalyses Exonucleolytic cleavage that removes extra residues from the 3'-terminus of tRNA to produce 5'-mononucleotides.. Exonuclease involved in the 3' processing of various precursor tRNAs. Initiates hydrolysis at the 3'-terminus of an RNA molecule and releases 5'-mononucleotides. The protein is Ribonuclease D of Cronobacter turicensis (strain DSM 18703 / CCUG 55852 / LMG 23827 / z3032).